A 300-amino-acid chain; its full sequence is NAD kinase (300 aa).

The Proton acceptor role is filled by Asp-75. NAD(+)-binding positions include 75-76, 149-150, Arg-177, Asp-179, 190-195, Ala-214, and Gln-248; these read DG, ND, and TAYALS.

This sequence belongs to the NAD kinase family. The cofactor is a divalent metal cation.

It is found in the cytoplasm. The enzyme catalyses NAD(+) + ATP = ADP + NADP(+) + H(+). Its function is as follows. Involved in the regulation of the intracellular balance of NAD and NADP, and is a key enzyme in the biosynthesis of NADP. Catalyzes specifically the phosphorylation on 2'-hydroxyl of the adenosine moiety of NAD to yield NADP. The chain is NAD kinase from Burkholderia multivorans (strain ATCC 17616 / 249).